Reading from the N-terminus, the 1319-residue chain is MAQSLRLHFAARRSNTYPLSETSGDDLDSHVHMCFKRPTRISTSNVVQMKLTPRQTALAPLIKENVQSQERSSVPSSENVNKKSSCLQISLQPTRYSGYLQSSNVLADSDDASFTCILKDGIYSSAVVDNELNAVNDGHLVSSPAICSGSLSNFSTSDNGSYSSNGSDFGSCASITSGGSYTNSVISDSSSYTFPPSDDTFLGGNLPSDSTSNRSVPNRNTTPCEIFSRSTSTDPFVQDDLEHGLEIMKLPVSRNTKIPLKRYSSLVIFPRSPSTTRPTSPTSLCTLLSKGSYQTSHQFIISPSEIAHNEDGTSAKGFLSTAVNGLRLSKTICTPGEVRDIRPLHRKGSLQKKIVLSNNTPRQTVCEKSSEGYSCVSVHFTQRKAATLDCETTNGDCKPEMSEIKLNSDSEYIKLMHRTSACLPSSQNVDCQININGELERPHSQMNKNHGILRRSISLGGAYPNISCLSSLKHNCSKGGPSQLLIKFASGNEGKVDNLSRDSNRDCTNELSNSCKTRDDFLGQVDVPLYPLPTENPRLERPYTFKDFVLHPRSHKSRVKGYLRLKMTYLPKTSGSEDDNAEQAEELEPGWVVLDQPDAACHLQQQQEPSPLPPGWEERQDILGRTYYVNHESRRTQWKRPTPQDNLTDAENGNIQLQAQRAFTTRRQISEETESVDNRESSENWEIIREDEATMYSNQAFPSPPPSSNLDVPTHLAEELNARLTIFGNSAVSQPASSSNHSSRRGSLQAYTFEEQPTLPVLLPTSSGLPPGWEEKQDERGRSYYVDHNSRTTTWTKPTVQATVETSQLTSSQSSAGPQSQASTSDSGQQVTQPSEIEQGFLPKGWEVRHAPNGRPFFIDHNTKTTTWEDPRLKIPAHLRGKTSLDTSNDLGPLPPGWEERTHTDGRIFYINHNIKRTQWEDPRLENVAITGPAVPYSRDYKRKYEFFRRKLKKQNDIPNKFEMKLRRATVLEDSYRRIMGVKRADFLKARLWIEFDGEKGLDYGGVAREWFFLISKEMFNPYYGLFEYSATDNYTLQINPNSGLCNEDHLSYFKFIGRVAGMAVYHGKLLDGFFIRPFYKMMLHKPITLHDMESVDSEYYNSLRWILENDPTELDLRFIIDEELFGQTHQHELKNGGSEIVVTNKNKKEYIYLVIQWRFVNRIQKQMAAFKEGFFELIPQDLIKIFDENELELLMCGLGDVDVNDWREHTKYKNGYSANHQVIQWFWKAVLMMDSEKRIRLLQFVTGTSRVPMNGFAELYGSNGPQSFTVEQWGTPEKLPRAHTCFNRLDLPPYESFEELWDKLQMAIENTQGFDGVD.

N-acetylalanine is present on Ala2. Residues 204–229 (GNLPSDSTSNRSVPNRNTTPCEIFSR) form a disordered region. Polar residues predominate over residues 207 to 229 (PSDSTSNRSVPNRNTTPCEIFSR). The residue at position 576 (Ser576) is a Phosphoserine. The segment at 578 to 981 (DDNAEQAEEL…LEDSYRRIMG (404 aa)) is mediates interaction with TNIK. The region spanning 610–643 (SPLPPGWEERQDILGRTYYVNHESRRTQWKRPTP) is the WW 1 domain. Thr648 is subject to Phosphothreonine. Ser670 carries the phosphoserine modification. The Nuclear export signal motif lies at 716–726 (LAEELNARLTI). Residues Ser742 and Ser747 each carry the phosphoserine modification. Disordered regions lie at residues 755 to 780 (EQPT…QDER) and 796 to 834 (TKPT…VTQP). In terms of domain architecture, WW 2 spans 767–800 (SGLPPGWEEKQDERGRSYYVDHNSRTTTWTKPTV). Over residues 796–809 (TKPTVQATVETSQL) the composition is skewed to polar residues. The span at 810–825 (TSSQSSAGPQSQASTS) shows a compositional bias: low complexity. WW domains lie at 840–873 (GFLP…DPRL) and 892–925 (GPLP…DPRL). The HECT domain occupies 984–1318 (RADFLKARLW…IENTQGFDGV (335 aa)). Lys1279 is covalently cross-linked (Glycyl lysine isopeptide (Lys-Gly) (interchain with G-Cter in ubiquitin)). The active-site Glycyl thioester intermediate is the Cys1286.

Binds, in vitro, through the WW2 and WW3 domains, to neural isoforms of ENAH that contain the PPSY motif. Interacts with BEAN1, LITAF, RNF11, WBP1, WBP2, PMEPAI and PRRG2. Interacts with NDFIP1 and NDFIP2; this interaction activates the E3 ubiquitin-protein ligase and may induce its recruitment to exosomes. Interacts with UBE2D2. Interaction with PTEN is questionable according to PubMed:18562292. Interacts (via C2 domain) with GRB10 (via SH2 domain). Interacts with ERBB4. Interacts with TNIK; the interaction is direct, allows the TNIK-dependent recruitment of RAP2A and its ubiquitination by NEDD4. Interacts (via WW3 domain) with TNK2; EGF promotes this interaction. Interacts (via WW3 domain) with FGFR1 (via C-terminus). Interacts with OTUD7B. Interacts with ISG15. Interacts (via WW domain) with RAPGEF2; this interaction leads to ubiquitination and degradation via the proteasome pathway. Interacts (via WW domains) with ARRDC3 (via PPXY motifs). Interacts with LAPTM4B; may play a role in the lysosomal sorting of LAPTM4B. Interacts (via WW domains) with ARRDC1, ARRDC2 and ARRDC3. Interacts with ZBTB7B. Interacts with PRRG4 (via cytoplasmic domain). Interacts directly with LDLRAD3; this interaction promotes NEDD4 auto-ubiquitination. Interacts with ADRB2. Interacts (via WW domains) with DAZAP2 (via PPAY motif). Interacts with USP13. As to quaternary structure, (Microbial infection) Interacts with viral proteins that contain a late-budding motif P-P-P-Y. This interaction is essential for viral particle budding of many retroviruses, like HTLV-1 Gag and MLV Gag. Interacts with Herpes simplex virus 2 (HHV-2) protein UL56; this interaction induces NEDD4 degradation. Interacts with Ebola virus protein VP40. In terms of processing, undergoes 'Lys-29'-linked auto-ubiquitination at Lys-1279 and serves as a scaffold for recruiting USP13 to form an NEDD4-USP13 deubiquitination complex.

The protein resides in the cytoplasm. The protein localises to the nucleus. It localises to the cell membrane. The enzyme catalyses S-ubiquitinyl-[E2 ubiquitin-conjugating enzyme]-L-cysteine + [acceptor protein]-L-lysine = [E2 ubiquitin-conjugating enzyme]-L-cysteine + N(6)-ubiquitinyl-[acceptor protein]-L-lysine.. It functions in the pathway protein modification; protein ubiquitination. With respect to regulation, activated by NDFIP1- and NDFIP2-binding. In terms of biological role, E3 ubiquitin-protein ligase which accepts ubiquitin from an E2 ubiquitin-conjugating enzyme in the form of a thioester and then directly transfers the ubiquitin to targeted substrates. Specifically ubiquitinates 'Lys-63' in target proteins. Involved in the pathway leading to the degradation of VEGFR-2/KDFR, independently of its ubiquitin-ligase activity. Monoubiquitinates IGF1R at multiple sites, thus leading to receptor internalization and degradation in lysosomes. Ubiquitinates FGFR1, leading to receptor internalization and degradation in lysosomes. Promotes ubiquitination of RAPGEF2. According to PubMed:18562292 the direct link between NEDD4 and PTEN regulation through polyubiquitination described in PubMed:17218260 is questionable. Involved in ubiquitination of ERBB4 intracellular domain E4ICD. Part of a signaling complex composed of NEDD4, RAP2A and TNIK which regulates neuronal dendrite extension and arborization during development. Ubiquitinates TNK2 and regulates EGF-induced degradation of EGFR and TNF2. Ubiquitinates BRAT1 and this ubiquitination is enhanced in the presence of NDFIP1. Ubiquitinates DAZAP2, leading to its proteasomal degradation. Ubiquitinates POLR2A. Functions as a platform to recruit USP13 to form an NEDD4-USP13 deubiquitination complex that plays a critical role in cleaving the 'Lys-48'-linked ubiquitin chains of VPS34 and then stabilizing VPS34, thus promoting the formation of autophagosomes. Functionally, (Microbial infection) Involved in the ubiquitination of Ebola virus protein VP40 which plays a role in viral budding. In Homo sapiens (Human), this protein is E3 ubiquitin-protein ligase NEDD4 (NEDD4).